We begin with the raw amino-acid sequence, 155 residues long: Ribosomal RNA large subunit methyltransferase H (155 aa).

S-adenosyl-L-methionine is bound by residues L73, G104, and 123 to 128; that span reads ISKMTF.

It belongs to the RNA methyltransferase RlmH family. Homodimer.

The protein resides in the cytoplasm. It catalyses the reaction pseudouridine(1915) in 23S rRNA + S-adenosyl-L-methionine = N(3)-methylpseudouridine(1915) in 23S rRNA + S-adenosyl-L-homocysteine + H(+). Functionally, specifically methylates the pseudouridine at position 1915 (m3Psi1915) in 23S rRNA. The protein is Ribosomal RNA large subunit methyltransferase H of Francisella tularensis subsp. novicida (strain U112).